Here is an 86-residue protein sequence, read N- to C-terminus: Cytochrome c oxidase subunit 6B1 (86 aa).

The residue at position 2 (alanine 2) is an N-acetylalanine. Residues 27-73 (TRNCWQNYLDFHRCQKAMTAKGGDISVCEWYQRVYQSLCPTSWVTDW) enclose the CHCH domain. The short motif at 30–40 (CWQNYLDFHRC) is the Cx9C motif element. 2 disulfide bridges follow: cysteine 30–cysteine 65 and cysteine 40–cysteine 54. The Cx10C motif motif lies at 54–65 (CEWYQRVYQSLC).

This sequence belongs to the cytochrome c oxidase subunit 6B family. As to quaternary structure, component of the cytochrome c oxidase (complex IV, CIV), a multisubunit enzyme composed of 14 subunits. The complex is composed of a catalytic core of 3 subunits MT-CO1, MT-CO2 and MT-CO3, encoded in the mitochondrial DNA, and 11 supernumerary subunits COX4I, COX5A, COX5B, COX6A, COX6B, COX6C, COX7A, COX7B, COX7C, COX8 and NDUFA4, which are encoded in the nuclear genome. The complex exists as a monomer or a dimer and forms supercomplexes (SCs) in the inner mitochondrial membrane with NADH-ubiquinone oxidoreductase (complex I, CI) and ubiquinol-cytochrome c oxidoreductase (cytochrome b-c1 complex, complex III, CIII), resulting in different assemblies (supercomplex SCI(1)III(2)IV(1) and megacomplex MCI(2)III(2)IV(2)).

Its subcellular location is the mitochondrion inner membrane. It functions in the pathway energy metabolism; oxidative phosphorylation. Component of the cytochrome c oxidase, the last enzyme in the mitochondrial electron transport chain which drives oxidative phosphorylation. The respiratory chain contains 3 multisubunit complexes succinate dehydrogenase (complex II, CII), ubiquinol-cytochrome c oxidoreductase (cytochrome b-c1 complex, complex III, CIII) and cytochrome c oxidase (complex IV, CIV), that cooperate to transfer electrons derived from NADH and succinate to molecular oxygen, creating an electrochemical gradient over the inner membrane that drives transmembrane transport and the ATP synthase. Cytochrome c oxidase is the component of the respiratory chain that catalyzes the reduction of oxygen to water. Electrons originating from reduced cytochrome c in the intermembrane space (IMS) are transferred via the dinuclear copper A center (CU(A)) of subunit 2 and heme A of subunit 1 to the active site in subunit 1, a binuclear center (BNC) formed by heme A3 and copper B (CU(B)). The BNC reduces molecular oxygen to 2 water molecules using 4 electrons from cytochrome c in the IMS and 4 protons from the mitochondrial matrix. The polypeptide is Cytochrome c oxidase subunit 6B1 (COX6B1) (Pongo abelii (Sumatran orangutan)).